A 376-amino-acid chain; its full sequence is Nuclear egress protein 1 (376 aa).

S19 carries the post-translational modification Phosphoserine. The tract at residues 22 to 57 (RKRRQRELASKVASTVNGATSANNHGEPPSPADARP) is disordered. The span at 33-45 (VASTVNGATSANN) shows a compositional bias: polar residues. The CCCH-type zinc-finger motif lies at 106-211 (CLDISPYGNE…HVIFENSDVH (106 aa)). Residues 316–376 (VVSTNGCGPS…PLFLNSIRAP (61 aa)) are disordered. Polar residues predominate over residues 317–332 (VSTNGCGPSSSSQSTP).

This sequence belongs to the herpesviridae NEC1 protein family. Forms a heterohexameric complex with NEC2. Interacts with capsid vertex specific component 2/CVC2; this interaction directs the capsid to the host inner nuclear membrane to initiate budding. Post-translationally, phosphorylated at serine residues in the N-terminus. This phosphorylation regulates the localization within the inner nuclear membrane. Phosphorylation by viral kinase UL97 at Ser-19 plays an important role for correct viral nuclear egress complex (NEC) localization.

It localises to the host nucleus inner membrane. Its function is as follows. Plays an essential role in virion nuclear egress, the first step of virion release from infected cell. Within the host nucleus, NEC1 interacts with the newly formed capsid through the vertexes and directs it to the inner nuclear membrane by associating with NEC2. Induces the budding of the capsid at the inner nuclear membrane as well as its envelopment into the perinuclear space. There, the NEC1/NEC2 complex promotes the fusion of the enveloped capsid with the outer nuclear membrane and the subsequent release of the viral capsid into the cytoplasm where it will reach the secondary budding sites in the host Golgi or trans-Golgi network. The protein is Nuclear egress protein 1 of Homo sapiens (Human).